The chain runs to 324 residues: Dioxygenase tasH (324 aa).

A signal peptide spans M1 to A25. Positions 50, 96, and 284 each coordinate Zn(2+).

Belongs to the DODA-type extradiol aromatic ring-opening dioxygenase family. In terms of assembly, monomer. It depends on Zn(2+) as a cofactor.

Functionally, dioxygenase; part of the gene cluster that mediates the biosynthesis of the tetramic acids Sch210971 and Sch210972, potential anti-HIV fungal natural product that contain a decalin core. The PKS module of tasS together with the enoylreductase tasC catalyze the formation of the polyketide unit which is then conjugated to 4-hydroxyl-4-methyl glutamate (HMG) by the condensation domain of the tasS NRPS module. One unique structural feature of Sch210971 and Sch210972 is the tetramic acid motif proposed to be derived from the non-proteinogenic amino acid HMG, by a Dieckmann-type condensation catalyzed by the reductase domain of tasS. The aldolase tasA catalyzes the aldol condensation of 2 molecules of pyruvic acid to yield the intermediate 4-hydroxyl-4-methyl-2-oxoglutarate (HMOG), which can then be stereoselectively transaminated, may be by tasG, to form HMG. The Diels-Alderase tas3 then uses the Dieckmann product of tasS as substrate and catalyzes the Diels-Alder cycloaddition to form the decalin ring of Sch210971 and Sch210972. This Hapsidospora irregularis protein is Dioxygenase tasH.